The following is a 535-amino-acid chain: Cytochrome P450 monooxygenase atE (535 aa).

Cys455 contributes to the heme binding site.

It belongs to the cytochrome P450 family. Requires heme as cofactor.

It catalyses the reaction 3-methylcatechol + AH2 + O2 = 3-methylbenzene-1,2,4-triol + A + H2O. The protein operates within secondary metabolite biosynthesis. Cytochrome P450 monooxygenase; part of the gene cluster that mediates the biosynthesis of terreic acid, a quinone epoxide inhibitor of Bruton's tyrosine kinase. The first step of the pathway is the synthesis of 6-methylsalicylic acid (6-MSA) by the 6-methylsalicylic acid synthase atX. In the biosynthesis of 6-MSA, atX utilizes one acetyl-CoA and three malonyl-CoAs as its substrates and catalyzes a series of programmed reactions including Claisen condensation, reduction, aldol cyclization, and the hydrolytic cleavage that yields 6-MSA. The 6-methylsalicylate 1-monooxygenase atA then catalyzes the decarboxylative hydroxylation of 6-MSA to 3-methylcatechol. The next step is the conversion of 3-methylcatechol to 3-methyl-1,2,4-benzenetriol by cytochrome P450 monooxygenase atE, which is enhanced by cytochrome P450 monooxygenase atG. Then, the epoxidase atD catalyzes the epoxidation and hydroxyl oxidation of 3-methyl-1,2,4-benzenetriol to terremutin. Lastly, GMC oxidoreductase atC oxidizes terremutin to terreic acid. The chain is Cytochrome P450 monooxygenase atE from Aspergillus terreus (strain NIH 2624 / FGSC A1156).